A 419-amino-acid polypeptide reads, in one-letter code: L-rhamnose isomerase (419 aa).

Positions 262, 294, and 296 each coordinate Mn(2+).

It belongs to the rhamnose isomerase family. In terms of assembly, homotetramer. It depends on Mn(2+) as a cofactor.

The protein localises to the cytoplasm. The enzyme catalyses L-rhamnopyranose = L-rhamnulose. Its pathway is carbohydrate degradation; L-rhamnose degradation; glycerone phosphate from L-rhamnose: step 1/3. Functionally, catalyzes the interconversion of L-rhamnose and L-rhamnulose. The chain is L-rhamnose isomerase from Klebsiella pneumoniae subsp. pneumoniae (strain ATCC 700721 / MGH 78578).